Here is a 550-residue protein sequence, read N- to C-terminus: Methionine--tRNA ligase (550 aa).

A 'HIGH' region motif is present at residues 10-22 (LPYPNNSSPHLGN). Positions 336–340 (KFSKS) match the 'KMSKS' region motif. An ATP-binding site is contributed by Lys339.

Belongs to the class-I aminoacyl-tRNA synthetase family.

It carries out the reaction tRNA(Met) + L-methionine + ATP = L-methionyl-tRNA(Met) + AMP + diphosphate. The polypeptide is Methionine--tRNA ligase (MARS) (Acanthamoeba polyphaga mimivirus (APMV)).